The sequence spans 228 residues: Protein 33K (228 aa).

Residues 1-156 (MAPKKKLQLP…GALRLAPNEP (156 aa)) form a disordered region. Residues 15–53 (TDEEEYWDSQAEEVLDEEEEMMEDWDSLDEASEAEEVSD) show a composition bias toward acidic residues. 2 stretches are compositionally biased toward low complexity: residues 54–63 (ETPSPSVAFP) and 104–119 (AAPT…ATAA). Positions 171 to 198 (YAIFQQSRGQEQELKIKNRSLRSLTRSC) are necessary for nuclear subcellular location. The interval 177–197 (SRGQEQELKIKNRSLRSLTRS) is RS-repeat; required for splicing enhancer activity.

Belongs to the adenoviridae splicing factor family. As to quaternary structure, homooligomer. Interacts with DBP; this interaction occurs at a unique vertex during genome packaging. Interacts with IVa2; this interaction occurs at a unique vertex during genome packaging and seems to potentiate IVa2 and 33K oligomerization. Phosphorylated in vitro by human PKA and PRKDC. PRKDC inhibits, whereas PKA activates the splicing factor.

The protein localises to the host nucleus. Its function is as follows. Promotes alternative splicing of late transcripts by promoting splicing at weak 3' splice sites. Required for the temporal activation of major late pre-mRNA splicing at late times of infection. Induces the splicing and expression of the late capsid vertex protein. Probably functions as the small terminase that is part of the molecular motor that translocates genomic DNA in empty capsid during DNA packaging. This motor is located at a unique vertex and comprises at least the IVa2 ATPase, the small terminase 33K and probably a portal. Forms a ring-like structure of about 17 nm in which genomic DNA is translocated into the capsid. Stimulates IVa2 ATPase activity in the presence of the viral genome. Once the DNA is packaged, the terminase detaches: the 33K protein is present in the empty particles, but not in the mature virions. Also involved in virion assembly. This chain is Protein 33K, found in Homo sapiens (Human).